Consider the following 452-residue polypeptide: 51.5 kDa protein (452 aa).

The Helicase ATP-binding domain occupies 1 to 126 (MIQSPPGSGK…KDTYDYMIEG (126 aa)). One can recognise a Helicase C-terminal domain in the interval 177–333 (DVVQEYVKHA…NIVQAKQCPD (157 aa)). A zinc finger lies at 331-348 (CPDCSAMWPLSQKMCNLC).

Functionally, may play a role in either regulating bacteriophages replication or specifying expression of its own genes. This Lactococcus (lactic streptococci) protein is 51.5 kDa protein.